The sequence spans 97 residues: Citrate lyase acyl carrier protein (97 aa).

Position 14 is an O-(phosphoribosyl dephospho-coenzyme A)serine (S14).

This sequence belongs to the CitD family. As to quaternary structure, oligomer with a subunit composition of (alpha,beta,gamma)6.

It is found in the cytoplasm. Its function is as follows. Covalent carrier of the coenzyme of citrate lyase. In Enterobacter sp. (strain 638), this protein is Citrate lyase acyl carrier protein.